Reading from the N-terminus, the 64-residue chain is DNA-directed RNA polymerase subunit omega (64 aa).

Belongs to the RNA polymerase subunit omega family. In terms of assembly, the RNAP catalytic core consists of 2 alpha, 1 beta, 1 beta' and 1 omega subunit. When a sigma factor is associated with the core the holoenzyme is formed, which can initiate transcription.

It carries out the reaction RNA(n) + a ribonucleoside 5'-triphosphate = RNA(n+1) + diphosphate. Its function is as follows. Promotes RNA polymerase assembly. Latches the N- and C-terminal regions of the beta' subunit thereby facilitating its interaction with the beta and alpha subunits. The protein is DNA-directed RNA polymerase subunit omega of Oceanobacillus iheyensis (strain DSM 14371 / CIP 107618 / JCM 11309 / KCTC 3954 / HTE831).